A 150-amino-acid polypeptide reads, in one-letter code: Avidin-related protein 4/5 (150 aa).

Residues 1–24 (MVHTTSPLLLLLLLSLALVAPSLS) form the signal peptide. One can recognise an Avidin-like domain in the interval 26–147 (RKCSLTGKWT…GYNNFTRLCT (122 aa)). Cys-28 and Cys-105 are joined by a disulfide. Biotin contacts are provided by Asn-36, Ser-40, Tyr-57, Thr-59, and Asp-63. Residues Asn-67 and Asn-93 are each glycosylated (N-linked (GlcNAc...) asparagine). Residues Ser-95 and Asn-140 each contribute to the biotin site. The N-linked (GlcNAc...) asparagine glycan is linked to Asn-141.

The protein belongs to the avidin/streptavidin family. Homotetramer.

Its subcellular location is the secreted. Its function is as follows. Forms a strong non-covalent specific complex with biotin. The polypeptide is Avidin-related protein 4/5 (AVR4) (Gallus gallus (Chicken)).